We begin with the raw amino-acid sequence, 357 residues long: UDP-xylose transporter 3 (357 aa).

The next 10 membrane-spanning stretches (helical) occupy residues 7–27 (FQLG…SIVI), 31–51 (ALIS…HLLV), 75–95 (VMGF…SLGF), 100–120 (FYQM…TLFF), 132–152 (LTIL…LNML), 154–174 (SVLS…TNTI), 194–214 (AITL…QNVF), 224–244 (FFIV…FLVI), 250–270 (VTYQ…GYVL), and 280–300 (ILGI…CSIE). At Ser-334 the chain carries Phosphoserine.

The protein belongs to the TPT transporter family. TPT (TC 2.A.7.9) subfamily. In terms of tissue distribution, ubiquitous.

The protein localises to the golgi apparatus membrane. Nucleotide-sugar transporter that transports UDP-xylose and UMP in a strict counter-exchange mode. The chain is UDP-xylose transporter 3 from Arabidopsis thaliana (Mouse-ear cress).